A 980-amino-acid chain; its full sequence is MGPRALLVLLVATAWHAQGVPVIQPSGPELVVEPGTTVTLRCVGNGSVEWDGPISPHWNLDLDPPSSILTTNNATFQNTGTYHCTEPGNPQGGNATIHLYVKDPARPWKVLAQEVTVLEGQDALLPCLLTDPALEAGVSLVRVRGRPVLRQTNYSFSPWHGFTIHKAKFIENHVYQCSARVDGRTVTSMGIWLKVQKDISGPATLTLEPAELVRIQGEAAQIVCSASNIDVNFDVSLRHGDTKLTISQQSDFHDNRYQKVLTLNLDHVSFQDAGNYSCTATNAWGNHSASMVFRVVESAYLNLTSEQSLLQEVTVGEKVDLQVKVEAYPGLESFNWTYLGPFSDYQDKLDFVTIKDTYRYTSTLSLPRLKRSEAGRYSFLARNAGGQNALTFELTLRYPPEVRVTMTLINGSDTLLCEASGYPQPSVTWVQCRSHTDRCDESAGLVLEDSHSEVLSQVPFHEVIVHSLLAIGTLEHNRTYECRAFNSVGNSSQTFWPISIGAHTQLPDELLFTPVLLTCMSIMALLLLLLLLLLYKYKQKPKYQVRWKIIESYEGNSYTFIDPTQLPYNEKWEFPRNNLQFGKTLGAGAFGKVVEATAFGLGKEDAVLKVAVKMLKSTAHADEKEALMSELKIMSHLGQHENIVNLLGACTHGGPVLVITEYCCYGDLLNFLRRQAEAMLGPSLSVGQDPEAGAGYKNIHLEKKYVRRDSDFSSQGVDTYVEMRPVSTSSSNDSFSEEDLGKEDGRPLELRDLLHFSSQVAQGMAFLASKNCIHRDVAARNVLLTSGRVAKIGDFGLARDIMNDSNYIVKGNARLPVKWMAPESIFDCVYTVQSDVWSYGILLWEIFSLGLNPYPGILVNSKFYKLVKDGYQMAQPAFAPKNIYSIMQACWALEPTRRPTFQQICSLLQKQAQEDRRVPNYTNLPSSSSSSSSSSSSCRTGSGGGSSSEPEEESSSEHLACCEQGDIAQPLLQPNNYQFC.

The first 19 residues, 1 to 19 (MGPRALLVLLVATAWHAQG), serve as a signal peptide directing secretion. The Extracellular portion of the chain corresponds to 20–514 (VPVIQPSGPE…QLPDELLFTP (495 aa)). Ig-like C2-type domains lie at 21–100 (PVIQ…IHLY), 107–197 (PWKV…KVQK), 202–297 (PATL…RVVE), 299–397 (AYLN…LTLR), and 400–499 (PEVR…WPIS). Cysteines 42 and 84 form a disulfide. 11 N-linked (GlcNAc...) asparagine glycosylation sites follow: Asn45, Asn73, Asn94, Asn153, Asn275, Asn286, Asn302, Asn335, Asn410, Asn477, and Asn490. Cystine bridges form between Cys127–Cys177 and Cys224–Cys278. Cys417 and Cys482 form a disulfide bridge. Residues 515–535 (VLLTCMSIMALLLLLLLLLLY) form a helical membrane-spanning segment. The Cytoplasmic portion of the chain corresponds to 536 to 980 (KYKQKPKYQV…LLQPNNYQFC (445 aa)). The tract at residues 539 to 571 (QKPKYQVRWKIIESYEGNSYTFIDPTQLPYNEK) is regulatory juxtamembrane domain. Tyr543 and Tyr558 each carry phosphotyrosine; by autocatalysis. Residues 579–908 (LQFGKTLGAG…PTFQQICSLL (330 aa)) enclose the Protein kinase domain. ATP contacts are provided by residues 585–593 (LGAGAFGKV) and Lys613. A phosphotyrosine; by autocatalysis mark is found at Tyr696 and Tyr705. Residue Ser710 is modified to Phosphoserine. Tyr720 bears the Phosphotyrosine; by autocatalysis mark. Residues 723 to 743 (MRPVSTSSSNDSFSEEDLGKE) are disordered. Asp776 serves as the catalytic Proton acceptor. The tract at residues 794-816 (DFGLARDIMNDSNYIVKGNARLP) is activation loop. Tyr807 and Tyr921 each carry phosphotyrosine; by autocatalysis. Residues 918 to 959 (VPNYTNLPSSSSSSSSSSSSCRTGSGGGSSSEPEEESSSEHL) form a disordered region. A compositionally biased stretch (low complexity) spans 926–940 (SSSSSSSSSSSSCRT). Tyr977 carries the post-translational modification Phosphotyrosine; by autocatalysis.

The protein belongs to the protein kinase superfamily. Tyr protein kinase family. CSF-1/PDGF receptor subfamily. In terms of assembly, monomer. Homodimer. Interacts with CSF1 and IL34. Interaction with dimeric CSF1 or IL34 leads to receptor homodimerization. Interacts with INPPL1/SHIP2 and THOC5. Interacts (tyrosine phosphorylated) with PLCG2 (via SH2 domain). Interacts (tyrosine phosphorylated) with PIK3R1 (via SH2 domain). Interacts (tyrosine phosphorylated) with FYN, YES1 and SRC (via SH2 domain). Interacts (tyrosine phosphorylated) with CBL, GRB2 and SLA2. Post-translationally, autophosphorylated in response to CSF1 or IL34 binding. Phosphorylation at Tyr-558 is important for normal down-regulation of signaling by ubiquitination, internalization and degradation. Phosphorylation at Tyr-558 and Tyr-807 is important for interaction with SRC family members, including FYN, YES1 and SRC, and for subsequent activation of these protein kinases. Phosphorylation at Tyr-696 and Tyr-921 is important for interaction with GRB2. Phosphorylation at Tyr-720 is important for interaction with PIK3R1. Phosphorylation at Tyr-720 and Tyr-807 is important for interaction with PLCG2. Phosphorylation at Tyr-977 is important for interaction with CBL. Dephosphorylation by PTPN2 negatively regulates downstream signaling and macrophage differentiation. In terms of processing, ubiquitinated. Becomes rapidly polyubiquitinated after autophosphorylation, leading to its degradation.

It localises to the cell membrane. The enzyme catalyses L-tyrosyl-[protein] + ATP = O-phospho-L-tyrosyl-[protein] + ADP + H(+). Its activity is regulated as follows. Present in an inactive conformation in the absence of bound ligand. CSF1 or IL34 binding leads to dimerization and activation by autophosphorylation on tyrosine residues. Its function is as follows. Tyrosine-protein kinase that acts as a cell-surface receptor for CSF1 and IL34 and plays an essential role in the regulation of survival, proliferation and differentiation of hematopoietic precursor cells, especially mononuclear phagocytes, such as macrophages and monocytes. Promotes the release of pro-inflammatory chemokines in response to IL34 and CSF1, and thereby plays an important role in innate immunity and in inflammatory processes. Plays an important role in the regulation of osteoclast proliferation and differentiation, the regulation of bone resorption, and is required for normal bone and tooth development. Required for normal male and female fertility, and for normal development of milk ducts and acinar structures in the mammary gland during pregnancy. Promotes reorganization of the actin cytoskeleton, regulates formation of membrane ruffles, cell adhesion and cell migration, and promotes cancer cell invasion. Activates several signaling pathways in response to ligand binding, including the ERK1/2 and the JNK pathway. Phosphorylates PIK3R1, PLCG2, GRB2, SLA2 and CBL. Activation of PLCG2 leads to the production of the cellular signaling molecules diacylglycerol and inositol 1,4,5-trisphosphate, that then lead to the activation of protein kinase C family members, especially PRKCD. Phosphorylation of PIK3R1, the regulatory subunit of phosphatidylinositol 3-kinase, leads to activation of the AKT1 signaling pathway. Activated CSF1R also mediates activation of the MAP kinases MAPK1/ERK2 and/or MAPK3/ERK1, and of the SRC family kinases SRC, FYN and YES1. Activated CSF1R transmits signals both via proteins that directly interact with phosphorylated tyrosine residues in its intracellular domain, or via adapter proteins, such as GRB2. Promotes activation of STAT family members STAT3, STAT5A and/or STAT5B. Promotes tyrosine phosphorylation of SHC1 and INPP5D/SHIP-1. Receptor signaling is down-regulated by protein phosphatases, such as INPP5D/SHIP-1, that dephosphorylate the receptor and its downstream effectors, and by rapid internalization of the activated receptor. In the central nervous system, may play a role in the development of microglia macrophages. This chain is Macrophage colony-stimulating factor 1 receptor (CSF1R), found in Felis catus (Cat).